We begin with the raw amino-acid sequence, 373 residues long: 3 beta-hydroxysteroid dehydrogenase/Delta 5--&gt;4-isomerase type 1 (373 aa).

Residues G10–V15, Y155, and K159 each bind NADP(+). The active-site Proton donor is K159. Residues L288 to F308 form a helical membrane-spanning segment.

This sequence belongs to the 3-beta-HSD family. In terms of tissue distribution, adrenal glands, kidney, testes and ovaries.

It is found in the endoplasmic reticulum membrane. The protein localises to the mitochondrion membrane. It catalyses the reaction a 3beta-hydroxy-Delta(5)-steroid + NAD(+) = a 3-oxo-Delta(5)-steroid + NADH + H(+). The catalysed reaction is pregnenolone + NAD(+) = pregn-5-ene-3,20-dione + NADH + H(+). It carries out the reaction 3beta-hydroxyandrost-5-en-17-one + NAD(+) = androst-5-ene-3,17-dione + NADH + H(+). The enzyme catalyses androst-5-en-3beta,17beta-diol + NAD(+) = 17beta-hydroxy-androst-5-en-3-one + NADH + H(+). It catalyses the reaction a 3beta-hydroxysteroid + NADP(+) = a 3-oxosteroid + NADPH + H(+). The catalysed reaction is 5alpha-androstane-3beta,17beta-diol + NADP(+) = 17beta-hydroxy-5alpha-androstan-3-one + NADPH + H(+). It carries out the reaction 3beta-hydroxy-5alpha-androstan-17-one + NADP(+) = 5alpha-androstan-3,17-dione + NADPH + H(+). The enzyme catalyses a 3-oxo-Delta(5)-steroid = a 3-oxo-Delta(4)-steroid. It catalyses the reaction pregn-5-ene-3,20-dione = progesterone. The catalysed reaction is androst-5-ene-3,17-dione = androst-4-ene-3,17-dione. It carries out the reaction 17beta-hydroxy-androst-5-en-3-one = testosterone. The enzyme catalyses 5alpha-androstane-3beta,17beta-diol + NAD(+) = 17beta-hydroxy-5alpha-androstan-3-one + NADH + H(+). The protein operates within steroid hormone biosynthesis. Its pathway is steroid metabolism. A bifunctional enzyme responsible for the oxidation and isomerization of 3beta-hydroxy-Delta(5)-steroid precursors to 3-oxo-Delta(4)-steroids, an essential step in steroid hormone biosynthesis. Specifically catalyzes the conversion of pregnenolone to progesterone, dehydroepiandrosterone (DHEA) to 4-androstenedione, and androstenediol to testosterone. Additionally, catalyzes the interconversion between 3beta-hydroxy and 3-oxo-5alpha-androstane steroids controlling the bioavalability of the active forms. Specifically converts dihydrotestosterone to its inactive form 5alpha-androstanediol, that does not bind androgen receptor/AR. Also converts androstanedione, a precursor of testosterone and estrone, to epiandrosterone. Expected to use NAD(+) as preferred electron donor for the 3beta-hydroxy-steroid dehydrogenase activity and NADPH for the 3-ketosteroid reductase activity. The chain is 3 beta-hydroxysteroid dehydrogenase/Delta 5--&gt;4-isomerase type 1 from Rattus norvegicus (Rat).